A 375-amino-acid chain; its full sequence is Histidine biosynthesis bifunctional protein HisB (375 aa).

The segment at 1 to 168 (MTPIVFIDRD…GIAHTLADAP (168 aa)) is histidinol-phosphatase. Aspartate 8 serves as the catalytic Nucleophile. Mg(2+)-binding residues include aspartate 8, aspartate 10, and aspartate 128. Aspartate 10 serves as the catalytic Proton donor. Positions 169–375 (RRAVVQRHTK…HVLPSTKGAL (207 aa)) are imidazoleglycerol-phosphate dehydratase.

This sequence in the N-terminal section; belongs to the histidinol-phosphatase family. The protein in the C-terminal section; belongs to the imidazoleglycerol-phosphate dehydratase family. Mg(2+) serves as cofactor.

It is found in the cytoplasm. The enzyme catalyses D-erythro-1-(imidazol-4-yl)glycerol 3-phosphate = 3-(imidazol-4-yl)-2-oxopropyl phosphate + H2O. It catalyses the reaction L-histidinol phosphate + H2O = L-histidinol + phosphate. It participates in amino-acid biosynthesis; L-histidine biosynthesis; L-histidine from 5-phospho-alpha-D-ribose 1-diphosphate: step 6/9. The protein operates within amino-acid biosynthesis; L-histidine biosynthesis; L-histidine from 5-phospho-alpha-D-ribose 1-diphosphate: step 8/9. The sequence is that of Histidine biosynthesis bifunctional protein HisB from Xylella fastidiosa (strain 9a5c).